The chain runs to 78 residues: Omega-conotoxin-like SO-4 (78 aa).

The N-terminal stretch at 1–22 (MKLTCMVIVAVLLLTACQLITA) is a signal peptide. Residues 23 to 42 (DDSRGTQKHRSLRSTTKVSK) constitute a propeptide that is removed on maturation. Disulfide bonds link Cys46-Cys62, Cys53-Cys65, and Cys61-Cys72.

The protein belongs to the conotoxin O1 superfamily. As to expression, expressed by the venom duct.

It is found in the secreted. Functionally, omega-conotoxins act at presynaptic membranes, they bind and block voltage-gated calcium channels (Cav). This Conus striatus (Striated cone) protein is Omega-conotoxin-like SO-4 (SO4).